Reading from the N-terminus, the 220-residue chain is Tumor protein D54 (220 aa).

Position 1 is an N-acetylmethionine (M1). Phosphoserine is present on residues S3, S12, and S19. The stretch at 40-82 (GLTEGEEEELRAELAKVEEEIVTLRQVLAAKERHCGELKRRLG) forms a coiled coil. Phosphoserine is present on residues S96, S149, S168, and S175. The residue at position 177 (T177) is a Phosphothreonine. The residue at position 180 (S180) is a Phosphoserine. T187 bears the Phosphothreonine mark. Residues 189–220 (KSKVVGGRENGSDNLPPSPGSGDQTLPDHAPF) form a disordered region. Phosphoserine is present on residues S206 and S209.

This sequence belongs to the TPD52 family. In terms of assembly, forms a homodimer or heterodimer with other members of the family. Interacts with MAL2.

The protein is Tumor protein D54 (Tpd52l2) of Mus musculus (Mouse).